The primary structure comprises 315 residues: ADP/ATP translocase 4 (315 aa).

At 1–19 (MHREPAKKKAEKRLFDASS) the chain is on the mitochondrial intermembrane side. The Solcar 1 repeat unit spans residues 18–110 (SSFGKDLLAG…FAFKDKYKQL (93 aa)). A helical membrane pass occupies residues 20–49 (FGKDLLAGGVAAAVSKTAVAPIERVKLLLQ). The Mitochondrial matrix portion of the chain corresponds to 50–86 (VQASSKQISPEARYKGMVDCLVRIPREQGFFSFWRGN). The helical transmembrane segment at 87 to 111 (LANVIRYFPTQALNFAFKDKYKQLF) threads the bilayer. ADP is bound by residues Arg-92 and Lys-104. Residues 112 to 121 (MSGVNKEKQF) are Mitochondrial intermembrane-facing. A helical transmembrane segment spans residues 122 to 142 (WRWFLANLASGGAAGATSLCV). Solcar repeat units follow at residues 123–213 (RWFL…VKGL) and 220–307 (TPFL…IKEF). Over 143–190 (VYPLDFARTRLGVDIGKGPEERQFKGLGDCIMKIAKSDGIAGLYQGFG) the chain is Mitochondrial matrix. Residues 191 to 211 (VSVQGIIVYRASYFGAYDTVK) traverse the membrane as a helical segment. Over 212–222 (GLLPKPKKTPF) the chain is Mitochondrial intermembrane. A helical membrane pass occupies residues 223-243 (LVSFFIAQVVTTCSGILSYPF). The Mitochondrial matrix portion of the chain corresponds to 244–283 (DTVRRRMMMQSGEAKRQYKGTLDCFVKIYQHEGISSFFRG). Position 247 (Arg-247) interacts with ADP. Positions 247–252 (RRRMMM) are important for transport activity. A Nucleotide carrier signature motif motif is present at residues 247–252 (RRRMMM). A helical membrane pass occupies residues 284-301 (AFSNVLRGTGGALVLVLY). The Mitochondrial intermembrane segment spans residues 302 to 315 (DKIKEFFHIDIGGR).

This sequence belongs to the mitochondrial carrier (TC 2.A.29) family. Monomer. As to expression, expressed in brain, liver, sperm and testis. In testis, expressed at higher level in spermatocytes, while it is expressed at lower level in spermatogonial cells. Expressed in erythrocytes (at protein level).

The protein localises to the mitochondrion inner membrane. It localises to the membrane. The protein resides in the cell projection. It is found in the cilium. Its subcellular location is the flagellum membrane. The enzyme catalyses ADP(in) + ATP(out) = ADP(out) + ATP(in). It catalyses the reaction dATP(out) + ADP(in) = dATP(in) + ADP(out). The catalysed reaction is dADP(in) + ADP(out) = dADP(out) + ADP(in). It carries out the reaction H(+)(in) = H(+)(out). With respect to regulation, the matrix-open state (m-state) is inhibited by the membrane-permeable bongkrekic acid (BKA). The cytoplasmic-open state (c-state) is inhibited by the membrane-impermeable toxic inhibitor carboxyatractyloside (CATR). Proton transporter activity is inhibited by ADP:ATP antiporter activity. Its function is as follows. ADP:ATP antiporter that mediates import of ADP into the mitochondrial matrix for ATP synthesis, and export of ATP out to fuel the cell. Cycles between the cytoplasmic-open state (c-state) and the matrix-open state (m-state): operates by the alternating access mechanism with a single substrate-binding site intermittently exposed to either the cytosolic (c-state) or matrix (m-state) side of the inner mitochondrial membrane. Specifically required during spermatogenesis, probably to mediate ADP:ATP exchange in spermatocytes. Large ATP supplies from mitochondria may be critical for normal progression of spermatogenesis during early stages of meiotic prophase I, including DNA double-strand break repair and chromosomal synapsis. In addition to its ADP:ATP antiporter activity, also involved in mitochondrial uncoupling and mitochondrial permeability transition pore (mPTP) activity. Plays a role in mitochondrial uncoupling by acting as a proton transporter: proton transport uncouples the proton flows via the electron transport chain and ATP synthase to reduce the efficiency of ATP production and cause mitochondrial thermogenesis. Proton transporter activity is inhibited by ADP:ATP antiporter activity, suggesting that SLC25A31/ANT4 acts as a master regulator of mitochondrial energy output by maintaining a delicate balance between ATP production (ADP:ATP antiporter activity) and thermogenesis (proton transporter activity). Proton transporter activity requires free fatty acids as cofactor, but does not transport it. Among nucleotides, may also exchange ADP for dATP and dADP. Also plays a key role in mPTP opening, a non-specific pore that enables free passage of the mitochondrial membranes to solutes of up to 1.5 kDa, and which contributes to cell death. It is however unclear if SLC25A31/ANT4 constitutes a pore-forming component of mPTP or regulates it. In Homo sapiens (Human), this protein is ADP/ATP translocase 4.